A 431-amino-acid polypeptide reads, in one-letter code: Glutamate-1-semialdehyde 2,1-aminomutase (431 aa).

At K269 the chain carries N6-(pyridoxal phosphate)lysine.

It belongs to the class-III pyridoxal-phosphate-dependent aminotransferase family. HemL subfamily. In terms of assembly, homodimer. Requires pyridoxal 5'-phosphate as cofactor.

The protein localises to the cytoplasm. It carries out the reaction (S)-4-amino-5-oxopentanoate = 5-aminolevulinate. It participates in porphyrin-containing compound metabolism; protoporphyrin-IX biosynthesis; 5-aminolevulinate from L-glutamyl-tRNA(Glu): step 2/2. This Francisella tularensis subsp. holarctica (strain FTNF002-00 / FTA) protein is Glutamate-1-semialdehyde 2,1-aminomutase.